Consider the following 515-residue polypeptide: Lysosomal acid glucosylceramidase (515 aa).

Residues 1–19 form the signal peptide; it reads MAARLIGFFLFQAVSWAYG. 2 disulfides stabilise this stretch: cysteine 23–cysteine 35 and cysteine 37–cysteine 42. N-linked (GlcNAc...) asparagine glycosylation is found at asparagine 38 and asparagine 78. Asparagine 165 is a glycosylation site (N-linked (GlcNAc...) (high mannose) asparagine). Catalysis depends on glutamate 254, which acts as the Proton donor. Asparagine 289 carries an N-linked (GlcNAc...) asparagine glycan. Glutamate 358 (nucleophile) is an active-site residue. Asparagine 480 is a glycosylation site (N-linked (GlcNAc...) asparagine).

The protein belongs to the glycosyl hydrolase 30 family. Interacts with saposin-C. Interacts with SCARB2. Interacts with TCP1. Interacts with GRN; this interaction prevents aggregation of GBA1-SCARB2 complex via interaction with HSPA1A upon stress.

The protein resides in the lysosome membrane. It catalyses the reaction a beta-D-glucosyl-(1&lt;-&gt;1')-N-acylsphing-4-enine + H2O = an N-acylsphing-4-enine + D-glucose. It carries out the reaction a beta-D-galactosyl-(1&lt;-&gt;1')-N-acylsphing-4-enine + H2O = an N-acylsphing-4-enine + D-galactose. The catalysed reaction is cholesteryl 3-beta-D-glucoside + H2O = cholesterol + D-glucose. The enzyme catalyses a beta-D-glucosyl-(1&lt;-&gt;1')-N-acylsphing-4-enine + cholesterol = cholesteryl 3-beta-D-glucoside + an N-acylsphing-4-enine. It catalyses the reaction beta-D-glucosyl-(1&lt;-&gt;1')-N-hexadecanoylsphing-4-enine + cholesterol = cholesteryl 3-beta-D-glucoside + N-hexadecanoylsphing-4-enine. It carries out the reaction beta-D-glucosyl-N-(9Z-octadecenoyl)-sphing-4E-enine + cholesterol = N-(9Z-octadecenoyl)-sphing-4-enine + cholesteryl 3-beta-D-glucoside. The catalysed reaction is beta-D-glucosyl-N-octanoylsphing-4E-enine + cholesterol = N-octanoylsphing-4-enine + cholesteryl 3-beta-D-glucoside. The enzyme catalyses beta-D-glucosyl-N-dodecanoylsphing-4-enine + cholesterol = N-dodecanoylsphing-4-enine + cholesteryl 3-beta-D-glucoside. It catalyses the reaction beta-D-glucosyl-(1&lt;-&gt;1)-N-octadecanoylsphing-4-enine + cholesterol = N-octadecanoylsphing-4-enine + cholesteryl 3-beta-D-glucoside. It carries out the reaction beta-D-glucosyl-(1&lt;-&gt;1')-N-(15Z-tetracosenoyl)-sphing-4-enine + cholesterol = N-(15Z-tetracosenoyl)-sphing-4-enine + cholesteryl 3-beta-D-glucoside. The catalysed reaction is a beta-D-galactosyl-(1&lt;-&gt;1')-N-acylsphing-4-enine + cholesterol = cholesteryl 3-beta-D-galactoside + an N-acylsphing-4-enine. The enzyme catalyses 1-(beta-D-galactosyl)-N-dodecanoylsphing-4-enine + cholesterol = cholesteryl 3-beta-D-galactoside + N-dodecanoylsphing-4-enine. It catalyses the reaction a beta-D-xylosyl-(1&lt;-&gt;1')-N-acylsphing-4-enine + cholesterol = cholesteryl 3-beta-D-xyloside + an N-acylsphing-4-enine. It carries out the reaction beta-D-xylosyl-(1&lt;-&gt;1')-N-(9Z-octadecenoyl)-sphing-4-enine + cholesterol = cholesteryl 3-beta-D-xyloside + N-(9Z-octadecenoyl)-sphing-4-enine. The protein operates within steroid metabolism; cholesterol metabolism. It participates in sphingolipid metabolism. Its activity is regulated as follows. Inhibited by conduritol B epoxide/CBE. Glucosylceramidase that catalyzes, within the lysosomal compartment, the hydrolysis of glucosylceramides/GlcCers (such as beta-D-glucosyl-(1&lt;-&gt;1')-N-acylsphing-4-enine) into free ceramides (such as N-acylsphing-4-enine) and glucose. Plays a central role in the degradation of complex lipids and the turnover of cellular membranes. Through the production of ceramides, participates in the PKC-activated salvage pathway of ceramide formation. Catalyzes the glucosylation of cholesterol, through a transglucosylation reaction where glucose is transferred from GlcCer to cholesterol. GlcCer containing mono-unsaturated fatty acids (such as beta-D-glucosyl-N-(9Z-octadecenoyl)-sphing-4-enine) are preferred as glucose donors for cholesterol glucosylation when compared with GlcCer containing same chain length of saturated fatty acids (such as beta-D-glucosyl-N-octadecanoyl-sphing-4-enine). Under specific conditions, may alternatively catalyze the reverse reaction, transferring glucose from cholesteryl 3-beta-D-glucoside to ceramide. Can also hydrolyze cholesteryl 3-beta-D-glucoside producing glucose and cholesterol. Catalyzes the hydrolysis of galactosylceramides/GalCers (such as beta-D-galactosyl-(1&lt;-&gt;1')-N-acylsphing-4-enine), as well as the transfer of galactose between GalCers and cholesterol in vitro, but with lower activity than with GlcCers. Contrary to GlcCer and GalCer, xylosylceramide/XylCer (such as beta-D-xyosyl-(1&lt;-&gt;1')-N-acylsphing-4-enine) is not a good substrate for hydrolysis, however it is a good xylose donor for transxylosylation activity to form cholesteryl 3-beta-D-xyloside. The protein is Lysosomal acid glucosylceramidase (Gba1) of Mus musculus (Mouse).